Consider the following 66-residue polypeptide: Alpha-conotoxin GID (66 aa).

The first 21 residues, 1–21 (MGMRMMFTVFLLVVLAATIVS), serve as a signal peptide directing secretion. A propeptide spanning residues 22–44 (FTSDRASDGRNVAAKAFHRIGRT) is cleaved from the precursor. Residues 45-48 (IRDE) are N-terminal tail important for activity on alpha-3-beta-2/CHRNA3-CHRNB2 and alpha-4-beta-2/CHRNA4-CHRNB2 nAChR. E48 carries the 4-carboxyglutamate modification. Disulfide bonds link C49/C55 and C50/C63. Residues 51–53 (SNP) form a ser-Xaa-Pro motif, crucial for potent interaction with nAChR region. The residue at position 60 (P60) is a 4-hydroxyproline.

The protein belongs to the conotoxin A superfamily. In terms of processing, gamma-carboxyglutamation of Glu-48 seems to be not important for nAChR inhibition, since synthetic peptides without this modification do not show change in inhibition of alpha-7/CHRNA7 and alpha-3-beta-2/CHRNA3-CHRNB2 nAChR and show a 2.3-fold increase in inhibition of alpha-4-beta-2/CHRNA4-CHRNB2 nAChR. Hydroxylation of Pro-60 seems to be important for nAChR inhibition, since synthetic peptides without this modification show a small decrease in inhibition of alpha-7/CHRNA7 and alpha-3-beta-2/CHRNA3-CHRNB2 nAChR and a very important decrease in inhibition of alpha-4-beta-2/CHRNA4-CHRNB2 nAChR. Post-translationally, an amidation of Cys-63 increases potency against alpha-7/CHRNA7 (2.6-fold) and alpha-3-beta-2/CHRNA3-CHRNB2 (2-fold) nAChR. On the other hand, the peptide has no more activity on alpha-4-beta-2/CHRNA4-CHRNB2 nAChR with an amidated Cys-63. Expressed by the venom duct.

It is found in the secreted. In terms of biological role, alpha-conotoxins act on postsynaptic membranes, they bind to the nicotinic acetylcholine receptors (nAChR) and thus inhibit them. This toxin reversibly blocks alpha-3-beta-2/CHRNA3-CHRNB2 (IC(50)=3.1-5.1 nM), alpha-7/CHRNA7 (IC(50)=4.5-5.1 nM), and alpha-4-beta-2/CHRNA4-CHRNB2 (IC(50)=128.6-390 nM) nAChRs. This is Alpha-conotoxin GID from Conus geographus (Geography cone).